The chain runs to 68 residues: Large ribosomal subunit protein uL29 (68 aa).

The protein belongs to the universal ribosomal protein uL29 family.

This chain is Large ribosomal subunit protein uL29, found in Acidiphilium cryptum (strain JF-5).